Reading from the N-terminus, the 491-residue chain is UDP-N-acetylmuramoyl-L-alanyl-D-glutamate--2,6-diaminopimelate ligase (491 aa).

Serine 30 is a UDP-N-acetyl-alpha-D-muramoyl-L-alanyl-D-glutamate binding site. Glycine 108–threonine 114 is a binding site for ATP. Residues asparagine 149, threonine 150–threonine 151, serine 177, and arginine 185 each bind UDP-N-acetyl-alpha-D-muramoyl-L-alanyl-D-glutamate. At lysine 217 the chain carries N6-carboxylysine. Meso-2,6-diaminopimelate is bound by residues arginine 383, aspartate 407–arginine 410, glycine 457, and glutamate 461. Residues aspartate 407 to arginine 410 carry the Meso-diaminopimelate recognition motif motif.

It belongs to the MurCDEF family. MurE subfamily. Requires Mg(2+) as cofactor. Post-translationally, carboxylation is probably crucial for Mg(2+) binding and, consequently, for the gamma-phosphate positioning of ATP.

The protein resides in the cytoplasm. It carries out the reaction UDP-N-acetyl-alpha-D-muramoyl-L-alanyl-D-glutamate + meso-2,6-diaminopimelate + ATP = UDP-N-acetyl-alpha-D-muramoyl-L-alanyl-gamma-D-glutamyl-meso-2,6-diaminopimelate + ADP + phosphate + H(+). Its pathway is cell wall biogenesis; peptidoglycan biosynthesis. Functionally, catalyzes the addition of meso-diaminopimelic acid to the nucleotide precursor UDP-N-acetylmuramoyl-L-alanyl-D-glutamate (UMAG) in the biosynthesis of bacterial cell-wall peptidoglycan. The chain is UDP-N-acetylmuramoyl-L-alanyl-D-glutamate--2,6-diaminopimelate ligase from Bacillus cereus (strain ATCC 14579 / DSM 31 / CCUG 7414 / JCM 2152 / NBRC 15305 / NCIMB 9373 / NCTC 2599 / NRRL B-3711).